Reading from the N-terminus, the 182-residue chain is UPF0397 protein SPP_0507 (182 aa).

A run of 5 helical transmembrane segments spans residues 10–30 (VVAV…NIPT), 46–66 (LLSI…GHAI), 73–93 (YGLW…VGLF), 109–129 (ILIF…VLAP), and 148–168 (IVAG…LLLA).

It belongs to the UPF0397 family.

The protein localises to the cell membrane. The sequence is that of UPF0397 protein SPP_0507 from Streptococcus pneumoniae (strain P1031).